A 539-amino-acid chain; its full sequence is uncharacterized protein (539 aa).

Ser216 acts as the Acyl-ester intermediate in catalysis.

It belongs to the type-B carboxylesterase/lipase family.

Its subcellular location is the cytoplasm. The protein resides in the nucleus. This is an uncharacterized protein from Schizosaccharomyces pombe (strain 972 / ATCC 24843) (Fission yeast).